The following is a 296-amino-acid chain: MKLAILSRDGTLFSCRRLREAAQARGHKVDVIDPLSCYMNINSAAPSIHYRGRRLKHYDAVIPRIGPLTTFYGTAVLRQFEMLGSYALNESAAITRARDKLHSLQLLARQGIDLPITGFADSPDDTGDLITMVGGAPLVVKLVEGTQGIGVVLAETRQAAESVIDAFRGLKAQFLVQEFVAEAGGRDVRCLVIGDKVVAVIERHAKEGDFRSNLHRGGSARAVTISAAERAVAIHAAAALGLNVAGVDILRAKRGPLVMEVNASPGLEGIEAASDMDIATLMITFIEARLADRSSR.

The 184-residue stretch at 104-287 folds into the ATP-grasp domain; sequence LQLLARQGID…IATLMITFIE (184 aa). Residues K141, 178 to 179, D187, and 211 to 213 contribute to the ATP site; these read EF and RSN. Residues D248, E260, and N262 each contribute to the Mg(2+) site. Mn(2+) contacts are provided by D248, E260, and N262.

Belongs to the RimK family. It depends on Mg(2+) as a cofactor. Mn(2+) serves as cofactor.

This is Probable alpha-L-glutamate ligase from Sodalis glossinidius (strain morsitans).